A 240-amino-acid chain; its full sequence is Ribonuclease PH (240 aa).

Phosphate contacts are provided by residues Arg86 and 124 to 126 (GTR).

The protein belongs to the RNase PH family. Homohexameric ring arranged as a trimer of dimers.

It carries out the reaction tRNA(n+1) + phosphate = tRNA(n) + a ribonucleoside 5'-diphosphate. Phosphorolytic 3'-5' exoribonuclease that plays an important role in tRNA 3'-end maturation. Removes nucleotide residues following the 3'-CCA terminus of tRNAs; can also add nucleotides to the ends of RNA molecules by using nucleoside diphosphates as substrates, but this may not be physiologically important. Probably plays a role in initiation of 16S rRNA degradation (leading to ribosome degradation) during starvation. The protein is Ribonuclease PH of Rickettsia prowazekii (strain Madrid E).